A 373-amino-acid polypeptide reads, in one-letter code: GTPase Obg (373 aa).

The Obg domain occupies 1 to 159 (MKFIDEARIE…RMVRLELKVL (159 aa)). The tract at residues 128–147 (LHFKSSTNRAPRQKTDGKPG) is disordered. One can recognise an OBG-type G domain in the interval 160 to 334 (ADVGLLGMPN…LCYAVFDHIS (175 aa)). Residues 166–173 (GMPNAGKS), 191–195 (FTTLA), 213–216 (DIPG), 284–287 (NKLD), and 315–317 (SAL) contribute to the GTP site. The Mg(2+) site is built by S173 and T193. The disordered stretch occupies residues 354 to 373 (FREKPQAPAAADDAGTDPQV). The span at 359-373 (QAPAAADDAGTDPQV) shows a compositional bias: low complexity.

Belongs to the TRAFAC class OBG-HflX-like GTPase superfamily. OBG GTPase family. Monomer. Requires Mg(2+) as cofactor.

It localises to the cytoplasm. In terms of biological role, an essential GTPase which binds GTP, GDP and possibly (p)ppGpp with moderate affinity, with high nucleotide exchange rates and a fairly low GTP hydrolysis rate. Plays a role in control of the cell cycle, stress response, ribosome biogenesis and in those bacteria that undergo differentiation, in morphogenesis control. In Paraburkholderia phytofirmans (strain DSM 17436 / LMG 22146 / PsJN) (Burkholderia phytofirmans), this protein is GTPase Obg.